A 581-amino-acid chain; its full sequence is DNA primase (581 aa).

Residues 40 to 64 form a CHC2-type zinc finger; the sequence is CPFHNEKTPSFTVNGEKQFYHCFGC. Positions 259 to 341 constitute a Toprim domain; the sequence is NRLLVVEGYM…GRQLRFMFLP (83 aa). Glutamate 265, aspartate 309, and aspartate 311 together coordinate Mg(2+).

It belongs to the DnaG primase family. Monomer. Interacts with DnaB. Requires Zn(2+) as cofactor. Mg(2+) serves as cofactor.

It catalyses the reaction ssDNA + n NTP = ssDNA/pppN(pN)n-1 hybrid + (n-1) diphosphate.. Functionally, RNA polymerase that catalyzes the synthesis of short RNA molecules used as primers for DNA polymerase during DNA replication. This is DNA primase from Shigella flexneri.